Reading from the N-terminus, the 90-residue chain is MSRTIFCTFLKKDAEGQDFQLYPGEIGKRIYNEISKEAWSQWITKQTMLINEKKLSMMNIEDRKLLEQEMVNFLFEGQDVHIAGYTPPSK.

This sequence belongs to the Fe(2+)-trafficking protein family. Monomer.

Could be a mediator in iron transactions between iron acquisition and iron-requiring processes, such as synthesis and/or repair of Fe-S clusters in biosynthetic enzymes. The protein is Probable Fe(2+)-trafficking protein of Yersinia pseudotuberculosis serotype O:1b (strain IP 31758).